The chain runs to 430 residues: Adenylosuccinate synthetase (430 aa).

GTP is bound by residues 12 to 18 (GDEGKGK) and 40 to 42 (GHT). Residue Asp13 is the Proton acceptor of the active site. Asp13 and Gly40 together coordinate Mg(2+). Residues 13 to 16 (DEGK), 38 to 41 (NAGH), Thr128, Arg142, Gln223, Thr238, and Arg302 each bind IMP. Catalysis depends on His41, which acts as the Proton donor. 298–304 (TTTGRPR) provides a ligand contact to substrate. GTP is bound by residues Arg304, 330-332 (SID), and 412-414 (SVG).

Belongs to the adenylosuccinate synthetase family. Homodimer. It depends on Mg(2+) as a cofactor.

It localises to the cytoplasm. It carries out the reaction IMP + L-aspartate + GTP = N(6)-(1,2-dicarboxyethyl)-AMP + GDP + phosphate + 2 H(+). The protein operates within purine metabolism; AMP biosynthesis via de novo pathway; AMP from IMP: step 1/2. Its function is as follows. Plays an important role in the de novo pathway of purine nucleotide biosynthesis. Catalyzes the first committed step in the biosynthesis of AMP from IMP. This chain is Adenylosuccinate synthetase, found in Bacillus licheniformis (strain ATCC 14580 / DSM 13 / JCM 2505 / CCUG 7422 / NBRC 12200 / NCIMB 9375 / NCTC 10341 / NRRL NRS-1264 / Gibson 46).